The chain runs to 385 residues: Methionyl-tRNA formyltransferase, mitochondrial (385 aa).

This sequence belongs to the Fmt family.

Its subcellular location is the mitochondrion. The enzyme catalyses L-methionyl-tRNA(fMet) + (6R)-10-formyltetrahydrofolate = N-formyl-L-methionyl-tRNA(fMet) + (6S)-5,6,7,8-tetrahydrofolate + H(+). Methionyl-tRNA formyltransferase that formylates methionyl-tRNA in mitochondria and is crucial for translation initiation. The polypeptide is Methionyl-tRNA formyltransferase, mitochondrial (Mtfmt) (Rattus norvegicus (Rat)).